Consider the following 148-residue polypeptide: Deoxyuridine 5'-triphosphate nucleotidohydrolase (148 aa).

Substrate-binding positions include 67-69 (RSG), asparagine 80, 84-86 (LID), and methionine 94.

The protein belongs to the dUTPase family. Requires Mg(2+) as cofactor.

It catalyses the reaction dUTP + H2O = dUMP + diphosphate + H(+). It participates in pyrimidine metabolism; dUMP biosynthesis; dUMP from dCTP (dUTP route): step 2/2. In terms of biological role, this enzyme is involved in nucleotide metabolism: it produces dUMP, the immediate precursor of thymidine nucleotides and it decreases the intracellular concentration of dUTP so that uracil cannot be incorporated into DNA. This is Deoxyuridine 5'-triphosphate nucleotidohydrolase from Francisella philomiragia subsp. philomiragia (strain ATCC 25017 / CCUG 19701 / FSC 153 / O#319-036).